The chain runs to 176 residues: Japanin-like-RS (176 aa).

The first 24 residues, 1 to 24 (MKVLLCLVCSFYIIVSSITTMTTG), serve as a signal peptide directing secretion. Intrachain disulfides connect C52-C174 and C138-C162. N155 is a glycosylation site (N-linked (GlcNAc...) asparagine).

This sequence belongs to the calycin superfamily. Lipocalin family. Homodimer; non-disulfide-linked. Each monomer accommodates one molecule of cholesterol in a pocket. Expressed in salivary glands.

Its subcellular location is the secreted. Salivary tick protein that modulates host immune response. This protein blocks dendritic cell (DC) differentiation from monocytes. In addition, it inhibits up-regulation of costimulatory molecules and pro-inflammatory cytokines in response to stimuli and promotes up-regulation of co-inhibitory molecules and the anti-inflammatory cytokine interleukin-10. It has a pocket to accomodate cholesterol, which may have immune-modulatory roles, either directly or through interactions with the host gut microbiota. The sequence is that of Japanin-like-RS from Rhipicephalus sanguineus (Brown dog tick).